The chain runs to 718 residues: Probable GTP diphosphokinase RSH2, chloroplastic (718 aa).

Residues 1–68 (MSVPAIAVYT…LFSSPTAAPR (68 aa)) constitute a chloroplast transit peptide. The tract at residues 9 to 48 (YTSPPGAVYTSSSSSELEASSRGSAPCATAAPPSPASSHR) is disordered. Low complexity predominate over residues 19–39 (SSSSSELEASSRGSAPCATAA). The region spanning 243 to 347 (YLQHCVETAV…IKLADRLHNM (105 aa)) is the HD domain.

It belongs to the RelA/SpoT family.

It is found in the plastid. The protein resides in the chloroplast. The catalysed reaction is GTP + ATP = guanosine 3'-diphosphate 5'-triphosphate + AMP. In terms of biological role, probable ppGpp (guanosine 3'-diphosphate 5'-diphosphate) synthetase that may be involved in a rapid plant ppGpp-mediated response to pathogens and other stresses. This chain is Probable GTP diphosphokinase RSH2, chloroplastic (RSH2), found in Oryza sativa subsp. japonica (Rice).